We begin with the raw amino-acid sequence, 201 residues long: Recombination protein RecR (201 aa).

A C4-type zinc finger spans residues 57–72 (CRYCRNLSDAEVCLLC). In terms of domain architecture, Toprim spans 80–175 (QQICVVETPA…QATRLAYGVP (96 aa)).

Belongs to the RecR family.

May play a role in DNA repair. It seems to be involved in an RecBC-independent recombinational process of DNA repair. It may act with RecF and RecO. The protein is Recombination protein RecR of Dichelobacter nodosus (strain VCS1703A).